A 545-amino-acid chain; its full sequence is Probable protein kinase UbiB (545 aa).

The 379-residue stretch at 123–501 (DFEPIALASA…QIKQRQSQYL (379 aa)) folds into the Protein kinase domain. ATP contacts are provided by residues 129 to 137 (LASASIAQV) and Lys-152. Asp-287 acts as the Proton acceptor in catalysis. The helical transmembrane segment at 508–528 (LFLCGSLFLLSGLANIPWLFI) threads the bilayer.

It belongs to the ABC1 family. UbiB subfamily.

The protein localises to the cell inner membrane. It participates in cofactor biosynthesis; ubiquinone biosynthesis [regulation]. In terms of biological role, is probably a protein kinase regulator of UbiI activity which is involved in aerobic coenzyme Q (ubiquinone) biosynthesis. This is Probable protein kinase UbiB from Photorhabdus laumondii subsp. laumondii (strain DSM 15139 / CIP 105565 / TT01) (Photorhabdus luminescens subsp. laumondii).